Consider the following 935-residue polypeptide: Phosphoenolpyruvate carboxylase (935 aa).

Residues H161 and K593 contribute to the active site.

It belongs to the PEPCase type 1 family. Mg(2+) is required as a cofactor.

It carries out the reaction oxaloacetate + phosphate = phosphoenolpyruvate + hydrogencarbonate. Its function is as follows. Forms oxaloacetate, a four-carbon dicarboxylic acid source for the tricarboxylic acid cycle. The chain is Phosphoenolpyruvate carboxylase from Mycobacterium avium (strain 104).